The primary structure comprises 431 residues: Adenylosuccinate lyase (431 aa).

N(6)-(1,2-dicarboxyethyl)-AMP is bound by residues 4–5 (RY), 67–69 (RHD), and 93–94 (TS). H141 acts as the Proton donor/acceptor in catalysis. Residue Q212 participates in N(6)-(1,2-dicarboxyethyl)-AMP binding. The active-site Proton donor/acceptor is the S262. N(6)-(1,2-dicarboxyethyl)-AMP contacts are provided by residues S263, 268 to 270 (KRN), N276, and 307 to 311 (SAERI).

The protein belongs to the lyase 1 family. Adenylosuccinate lyase subfamily. As to quaternary structure, homotetramer. Residues from neighboring subunits contribute catalytic and substrate-binding residues to each active site.

It carries out the reaction N(6)-(1,2-dicarboxyethyl)-AMP = fumarate + AMP. It catalyses the reaction (2S)-2-[5-amino-1-(5-phospho-beta-D-ribosyl)imidazole-4-carboxamido]succinate = 5-amino-1-(5-phospho-beta-D-ribosyl)imidazole-4-carboxamide + fumarate. The protein operates within purine metabolism; AMP biosynthesis via de novo pathway; AMP from IMP: step 2/2. It participates in purine metabolism; IMP biosynthesis via de novo pathway; 5-amino-1-(5-phospho-D-ribosyl)imidazole-4-carboxamide from 5-amino-1-(5-phospho-D-ribosyl)imidazole-4-carboxylate: step 2/2. In terms of biological role, catalyzes two reactions in de novo purine nucleotide biosynthesis. Catalyzes the breakdown of 5-aminoimidazole- (N-succinylocarboxamide) ribotide (SAICAR or 2-[5-amino-1-(5-phospho-beta-D-ribosyl)imidazole-4-carboxamido]succinate) to 5-aminoimidazole-4-carboxamide ribotide (AICAR or 5-amino-1-(5-phospho-beta-D-ribosyl)imidazole-4-carboxamide) and fumarate, and of adenylosuccinate (ADS or N(6)-(1,2-dicarboxyethyl)-AMP) to adenosine monophosphate (AMP) and fumarate. Influences the affinity of glutamyl--tRNA ligase for its substrates and increases its thermostability. The polypeptide is Adenylosuccinate lyase (purB) (Bacillus subtilis (strain 168)).